Reading from the N-terminus, the 860-residue chain is Protein argonaute-2 (860 aa).

Positions 1–30 are disordered; the sequence is MYSGAGPALAPPAPPPPPIQGYAFKPPPRP. Tyr2 carries the post-translational modification 3'-nitrotyrosine. A compositionally biased stretch (pro residues) spans 9–30; the sequence is LAPPAPPPPPIQGYAFKPPPRP. The PAZ domain occupies 230 to 349; the sequence is PVIEFVCEVL…LPLEVCNIVA (120 aa). Residues 312-317 are interaction with guide RNA; the sequence is YFKDRH. Phosphoserine is present on Ser388. The region spanning 518-819 is the Piwi domain; the sequence is LVVVILPGKT…VAFRARYHLV (302 aa). The interaction with guide RNA stretch occupies residues 525 to 567; the sequence is GKTPVYAEVKRVGDTVLGMATQCVQMKNVQRTTPQTLSNLWLK. Positions 588–591 are interaction with GW182 family members; it reads FQQP. Residue Asp598 coordinates a divalent metal cation. Positions 651-661 are interaction with GW182 family members; that stretch reads LIQFYKSTRFK. Asp670 lines the a divalent metal cation pocket. Pro701 is modified (4-hydroxyproline). Interaction with guide RNA regions lie at residues 710 to 711, 754 to 762, and 791 to 813; these read KR, HAGIQGTSR, and YVRCTRSVSIPAPAYYAHLVAFR. Position 808 (His808) interacts with a divalent metal cation. Ser825, Ser829, Ser832, and Ser835 each carry phosphoserine.

Belongs to the argonaute family. Ago subfamily. In terms of assembly, interacts with DICER1 through its Piwi domain and with TARBP2 during assembly of the RNA-induced silencing complex (RISC). Together, DICER1, AGO2 and TARBP2 constitute the trimeric RISC loading complex (RLC), or micro-RNA (miRNA) loading complex (miRLC). Within the RLC/miRLC, DICER1 and TARBP2 are required to process precursor miRNAs (pre-miRNAs) to mature miRNAs and then load them onto AGO2. AGO2 bound to the mature miRNA constitutes the minimal RISC and may subsequently dissociate from DICER1 and TARBP2. Note however that the term RISC has also been used to describe the trimeric RLC/miRLC. The formation of RISC complexes containing siRNAs rather than miRNAs appears to occur independently of DICER1. Interacts with AGO1. Also interacts with DDB1, DDX5, DDX6, DDX20, DHX30, DHX36, DDX47, DHX9, ELAVL, FXR1, GEMIN4, HNRNPF, IGF2BP1, ILF3, IMP8, MATR3, PABPC1, PRMT5, P4HA1, P4HB, RBM4, SART3, TNRC6A, TNRC6B, UPF1 and YBX1. Interacts with the P-body components DCP1A and XRN1. Associates with polysomes and messenger ribonucleoproteins (mNRPs). Interacts with RBM4; the interaction is modulated under stress-induced conditions, occurs under both cell proliferation and differentiation conditions and in an RNA- and phosphorylation-independent manner. Interacts with LIMD1, WTIP and AJUBA. Interacts with TRIM71; the interaction increases in presence of RNA. Interacts with APOBEC3G in an RNA-dependent manner. Interacts with APOBEC3A, APOBEC3C, APOBEC3F and APOBEC3H. Interacts with DICER1, TARBP2, EIF6, MOV10 and RPL7A (60S ribosome subunit); they form a large RNA-induced silencing complex (RISC). Interacts with FMR1. Interacts with ZFP36. Interacts with RC3H1; the interaction is RNA independent. Found in a complex composed of AGO2, CHD7 and ARB2A. Interacts with SND1 and SYT11. Interacts with CLNK. Interacts with GARRE1. Interacts with GRB2; this interaction is important for the formation of a ternary complex containing GRB2, AGO2 and DICER1. The cofactor is Mg(2+). It depends on Mn(2+) as a cofactor. In terms of processing, hydroxylated. 4-hydroxylation appears to enhance protein stability but is not required for miRNA-binding or endonuclease activity. Ubiquitinated on surface-exposed lysines by a SCF-like E3 ubiquitin-protein ligase complex containing ZSWIM8 during target-directed microRNA degradation (TDMD), a process that mediates degradation of microRNAs (miRNAs). Ubiquitination by the SCF-like E3 ubiquitin-protein ligase complex containing ZSWIM8 leads to its subsequent degradation, thereby exposing miRNAs for degradation. ZSWIM8 recognizes and binds AGO2 when it is engaged with a TDMD target. Post-translationally, phosphorylation at Ser-388 by AKT3; leads to up-regulate translational repression of microRNA target and down-regulate endonucleolytic cleavage. In terms of processing, a phosphorylation cycle of C-terminal serine cluster (Ser-825-Ser-835) regulates the release of target mRNAs. Target-binding leads to phosphorylation of these residues by CSNK1A1, which reduces the affinity of AGO2 for mRNA and enables target release. The ANKRD52-PPP6C phosphatase complex dephosphorylates the residues, which primes AGO2 for binding a new target.

Its subcellular location is the cytoplasm. The protein localises to the P-body. It is found in the nucleus. The catalysed reaction is Endonucleolytic cleavage to 5'-phosphomonoester.. Functionally, required for RNA-mediated gene silencing (RNAi) by the RNA-induced silencing complex (RISC). The 'minimal RISC' appears to include AGO2 bound to a short guide RNA such as a microRNA (miRNA) or short interfering RNA (siRNA). These guide RNAs direct RISC to complementary mRNAs that are targets for RISC-mediated gene silencing. The precise mechanism of gene silencing depends on the degree of complementarity between the miRNA or siRNA and its target. Binding of RISC to a perfectly complementary mRNA generally results in silencing due to endonucleolytic cleavage of the mRNA specifically by AGO2. Binding of RISC to a partially complementary mRNA results in silencing through inhibition of translation, and this is independent of endonuclease activity. May inhibit translation initiation by binding to the 7-methylguanosine cap, thereby preventing the recruitment of the translation initiation factor eIF4-E. May also inhibit translation initiation via interaction with EIF6, which itself binds to the 60S ribosomal subunit and prevents its association with the 40S ribosomal subunit. The inhibition of translational initiation leads to the accumulation of the affected mRNA in cytoplasmic processing bodies (P-bodies), where mRNA degradation may subsequently occur. In some cases RISC-mediated translational repression is also observed for miRNAs that perfectly match the 3' untranslated region (3'-UTR). Can also up-regulate the translation of specific mRNAs under certain growth conditions. Binds to the AU element of the 3'-UTR of the TNF (TNF-alpha) mRNA and up-regulates translation under conditions of serum starvation. Also required for transcriptional gene silencing (TGS), in which short RNAs known as antigene RNAs or agRNAs direct the transcriptional repression of complementary promoter regions. This chain is Protein argonaute-2 (AGO2), found in Bos taurus (Bovine).